A 744-amino-acid polypeptide reads, in one-letter code: Zinc finger protein 366 (744 aa).

The segment at 206-228 is disordered; it reads KQPPEPLLPRKAEPQESEETKQK. Residues 213–228 are compositionally biased toward basic and acidic residues; it reads LPRKAEPQESEETKQK. 11 consecutive C2H2-type zinc fingers follow at residues 253-275, 281-303, 309-331, 337-359, 365-387, 393-415, 421-443, 449-471, 477-499, 505-527, and 533-556; these read WQCP…ILGH, HACT…MLTH, HKCQ…MMQH, HNCR…EAKH, NICV…LTTH, YNCS…MMKH, YICS…SLTH, HKCG…VLIH, YQCH…MIVH, FKCK…MHLH, and FKCL…KVKH. Positions 455–744 are interaction with NRIP1; it reads GREFTLLANM…MEKQAVLLGI (290 aa). The PXDLS motif lies at 590-594; it reads PFDLS. 2 disordered regions span residues 603–627 and 664–692; these read VFQS…NCYE and KEEK…QERD.

Interacts with ESR1 and NRIP1. Interacts (via PXDLS motif) with CTBP1. In terms of tissue distribution, expressed in immature and mature dendritic cells (DCs). Not detected in other blood cell types.

Its subcellular location is the nucleus. In terms of biological role, has transcriptional repression activity. Acts as a corepressor of ESR1; the function seems to involve CTBP1 and histone deacetylases. The protein is Zinc finger protein 366 of Homo sapiens (Human).